Here is a 258-residue protein sequence, read N- to C-terminus: uncharacterized protein (258 aa).

The region spanning 3–58 (VAERQQKIVEIVNMRSSIRVSELSDIFSVTEETIRRDLEKLEKEHKLSRSHGGAVS) is the HTH deoR-type domain. The H-T-H motif DNA-binding region spans 20 to 39 (IRVSELSDIFSVTEETIRRD).

This is an uncharacterized protein from Bacillus subtilis (strain 168).